A 315-amino-acid chain; its full sequence is Ribosomal RNA small subunit methyltransferase H (315 aa).

Residues 33-35 (GGH), Asp-52, Phe-84, Asp-106, and Gln-113 contribute to the S-adenosyl-L-methionine site. A disordered region spans residues 295–315 (SDELEENNRSHSAKLRVAEKL).

Belongs to the methyltransferase superfamily. RsmH family.

The protein localises to the cytoplasm. It catalyses the reaction cytidine(1402) in 16S rRNA + S-adenosyl-L-methionine = N(4)-methylcytidine(1402) in 16S rRNA + S-adenosyl-L-homocysteine + H(+). Specifically methylates the N4 position of cytidine in position 1402 (C1402) of 16S rRNA. This chain is Ribosomal RNA small subunit methyltransferase H, found in Lactobacillus gasseri (strain ATCC 33323 / DSM 20243 / BCRC 14619 / CIP 102991 / JCM 1131 / KCTC 3163 / NCIMB 11718 / NCTC 13722 / AM63).